An 81-amino-acid chain; its full sequence is Cytochrome b559 subunit alpha (81 aa).

The chain crosses the membrane as a helical span at residues 21-35 (VIHSITIPMLFVAGW). Histidine 23 provides a ligand contact to heme.

This sequence belongs to the PsbE/PsbF family. Heterodimer of an alpha subunit and a beta subunit. PSII is composed of 1 copy each of membrane proteins PsbA, PsbB, PsbC, PsbD, PsbE, PsbF, PsbH, PsbI, PsbJ, PsbK, PsbL, PsbM, PsbT, PsbX, PsbY, PsbZ, Psb30/Ycf12, peripheral proteins PsbO, CyanoQ (PsbQ), PsbU, PsbV and a large number of cofactors. It forms dimeric complexes. Heme b is required as a cofactor.

It is found in the cellular thylakoid membrane. Functionally, this b-type cytochrome is tightly associated with the reaction center of photosystem II (PSII). PSII is a light-driven water:plastoquinone oxidoreductase that uses light energy to abstract electrons from H(2)O, generating O(2) and a proton gradient subsequently used for ATP formation. It consists of a core antenna complex that captures photons, and an electron transfer chain that converts photonic excitation into a charge separation. This chain is Cytochrome b559 subunit alpha, found in Gloeothece citriformis (strain PCC 7424) (Cyanothece sp. (strain PCC 7424)).